Here is a 104-residue protein sequence, read N- to C-terminus: Gastrin (104 aa).

An N-terminal signal peptide occupies residues 1–21 (MQRLCAHALILVLALAAFCEA). The propeptide occupies 22 to 58 (SWKPHSQLQDAPVAPGANKGQEPLRMDRLGPASHPRR). Residues 26 to 70 (HSQLQDAPVAPGANKGQEPLRMDRLGPASHPRRQLGLQDPPHMVA) form a disordered region. Tyr-87 is subject to Sulfotyrosine. Phe-92 bears the Phenylalanine amide mark. A Phosphoserine modification is found at Ser-96. Positions 96 to 104 (SAEEGDQHP) are excised as a propeptide.

Belongs to the gastrin/cholecystokinin family. Sulfation enhances proteolytic processing, and blocks peptide degradation. Levels of sulfation differ between proteolytically-cleaved gastrins and between tissues.

Its subcellular location is the secreted. Gastrin stimulates the stomach mucosa to produce and secrete hydrochloric acid and the pancreas to secrete its digestive enzymes. It also stimulates smooth muscle contraction and increases blood circulation and water secretion in the stomach and intestine. In Ovis aries (Sheep), this protein is Gastrin (GAST).